We begin with the raw amino-acid sequence, 349 residues long: Ferredoxin--NADP reductase 1 (349 aa).

7 residues coordinate FAD: Glu-36, Lys-44, Tyr-48, Val-88, Leu-123, Asp-290, and Ser-331.

This sequence belongs to the ferredoxin--NADP reductase type 2 family. Homodimer. The cofactor is FAD.

The catalysed reaction is 2 reduced [2Fe-2S]-[ferredoxin] + NADP(+) + H(+) = 2 oxidized [2Fe-2S]-[ferredoxin] + NADPH. The polypeptide is Ferredoxin--NADP reductase 1 (Lysinibacillus sphaericus (strain C3-41)).